The sequence spans 498 residues: Probable cytosol aminopeptidase (498 aa).

Lys-264 and Asp-269 together coordinate Mn(2+). Lys-276 is a catalytic residue. Mn(2+) is bound by residues Asp-287, Asp-346, and Glu-348. Arg-350 is a catalytic residue.

This sequence belongs to the peptidase M17 family. Mn(2+) serves as cofactor.

The protein resides in the cytoplasm. It carries out the reaction Release of an N-terminal amino acid, Xaa-|-Yaa-, in which Xaa is preferably Leu, but may be other amino acids including Pro although not Arg or Lys, and Yaa may be Pro. Amino acid amides and methyl esters are also readily hydrolyzed, but rates on arylamides are exceedingly low.. It catalyses the reaction Release of an N-terminal amino acid, preferentially leucine, but not glutamic or aspartic acids.. Presumably involved in the processing and regular turnover of intracellular proteins. Catalyzes the removal of unsubstituted N-terminal amino acids from various peptides. The chain is Probable cytosol aminopeptidase from Xanthobacter autotrophicus (strain ATCC BAA-1158 / Py2).